Here is a 2506-residue protein sequence, read N- to C-terminus: Zinc finger protein 462 (2506 aa).

C2H2-type zinc fingers lie at residues 4–27 (LQCD…QDVH), 108–131 (FQCK…RKVH), and 162–185 (FSCQ…KMYH). Lysine 20 participates in a covalent cross-link: Glycyl lysine isopeptide (Lys-Gly) (interchain with G-Cter in SUMO1); alternate. Lysine 20 is covalently cross-linked (Glycyl lysine isopeptide (Lys-Gly) (interchain with G-Cter in SUMO2); alternate). Residues 215 to 241 (PCKELPAEVVERSILESMVKPLTKSRG) are interaction with PBX1. Glycyl lysine isopeptide (Lys-Gly) (interchain with G-Cter in SUMO2) cross-links involve residues lysine 234 and lysine 271. The interval 280 to 299 (QEGTNLPDVPNKSAPSPTSN) is disordered. 2 O-linked (GlcNAc6P) serine glycosylation sites follow: serine 292 and serine 309. Residues lysine 337, lysine 347, and lysine 349 each participate in a glycyl lysine isopeptide (Lys-Gly) (interchain with G-Cter in SUMO2) cross-link. The segment at 337–356 (KFSPMSYPQMKPKSPHNSGL) is disordered. Residues serine 350 and serine 354 each carry the phosphoserine modification. Lysine 428 is covalently cross-linked (Glycyl lysine isopeptide (Lys-Gly) (interchain with G-Cter in SUMO2)). 2 consecutive C2H2-type zinc fingers follow at residues 439 to 462 (FQCP…ENIH) and 470 to 492 (YKCD…KQCH). Lysine 484 is covalently cross-linked (Glycyl lysine isopeptide (Lys-Gly) (interchain with G-Cter in SUMO2)). The disordered stretch occupies residues 535 to 596 (DPLQQQQPPQ…QPQPPTQAAP (62 aa)). Residues 542-593 (PPQPPPPPPPPPPSQPQPLQQPQPPQLQPPHQVPPQPQTQPPPTQQPQPPTQ) are compositionally biased toward pro residues. Residues 600–623 (YKCTMCNYSTTTLKGLRVHQQHKH) form a C2H2-type 6 zinc finger. Glycyl lysine isopeptide (Lys-Gly) (interchain with G-Cter in SUMO2) cross-links involve residues lysine 631, lysine 657, and lysine 668. The interval 636–661 (PSSLPLENETDSHPSSSNTVKKSQTS) is disordered. The segment covering 648-661 (HPSSSNTVKKSQTS) has biased composition (polar residues). Position 688 is a phosphoserine (serine 688). Residues lysine 706 and aspartate 849 each participate in a glycyl lysine isopeptide (Lys-Gly) (interchain with G-Cter in SUMO2) cross-link. 3 consecutive C2H2-type zinc fingers follow at residues 843–866 (YYCK…QRMH), 886–908 (YRCL…YGEH), and 925–948 (YRCR…QRMH). Lysine 986 participates in a covalent cross-link: Glycyl lysine isopeptide (Lys-Gly) (interchain with G-Cter in SUMO2). The segment at 1030 to 1053 (YDCDVCSFASPNMHSVLVHYQKKH) adopts a C2H2-type 10 zinc-finger fold. Residue serine 1090 is modified to Phosphoserine. Lysine 1135 participates in a covalent cross-link: Glycyl lysine isopeptide (Lys-Gly) (interchain with G-Cter in SUMO2). The disordered stretch occupies residues 1157-1186 (MRGVEGPQGSPRPPAPIQQLNRSSSERDGP). Residue serine 1166 is modified to Phosphoserine. Residues lysine 1206, lysine 1214, lysine 1220, and lysine 1243 each participate in a glycyl lysine isopeptide (Lys-Gly) (interchain with G-Cter in SUMO2) cross-link. C2H2-type zinc fingers lie at residues 1265–1288 (LKCR…KKDH) and 1470–1493 (YQCT…GKKH). A Glycyl lysine isopeptide (Lys-Gly) (interchain with G-Cter in SUMO2) cross-link involves residue lysine 1499. The C2H2-type 13 zinc finger occupies 1515–1538 (YKCRHCPYINTRIHGVLTHYQKRH). Residues lysine 1571 and lysine 1591 each participate in a glycyl lysine isopeptide (Lys-Gly) (interchain with G-Cter in SUMO2) cross-link. C2H2-type zinc fingers lie at residues 1577-1600 (YRCK…EKYH), 1660-1683 (FRCQ…RIKH), and 1697-1720 (FKCA…QKRH). Glycyl lysine isopeptide (Lys-Gly) (interchain with G-Cter in SUMO2) cross-links involve residues lysine 1698 and lysine 1780. A C2H2-type 17 zinc finger spans residues 1892–1914 (YQCKHCDSKLQSTAELTSHLNIH). Residue lysine 1946 forms a Glycyl lysine isopeptide (Lys-Gly) (interchain with G-Cter in SUMO2) linkage. Residues 1968-1992 (YKCKFCVEVHPTLRAICNHLRKHVQ) form a C2H2-type 18; degenerate zinc finger. Lysine 2004 bears the N6-methyllysine mark. 3 consecutive C2H2-type zinc fingers follow at residues 2025 to 2048 (YSCQ…QTHH), 2054 to 2077 (FRCK…LKAH), and 2083 to 2106 (YKCS…LKVH). Lysine 2104 is covalently cross-linked (Glycyl lysine isopeptide (Lys-Gly) (interchain with G-Cter in SUMO2)). The segment at 2122-2152 (SSHSHHSSQKATPAEEVEDSNDSSYSEPPDV) is disordered. Polar residues predominate over residues 2143–2152 (DSSYSEPPDV). A phosphoserine mark is found at serine 2172 and serine 2177. 3 consecutive C2H2-type zinc fingers follow at residues 2191 to 2214 (LHCE…RDKH), 2220 to 2243 (FKCK…EAGH), and 2254 to 2276 (LRCP…IVLH). Lysine 2293 participates in a covalent cross-link: Glycyl lysine isopeptide (Lys-Gly) (interchain with G-Cter in SUMO2). 2 consecutive C2H2-type zinc fingers follow at residues 2300-2322 (FRCD…IEKH) and 2328-2351 (YKCQ…RDEH). The interval 2371 to 2396 (MKEKMESSSSDDEDKEEEMNSKAEDR) is disordered. The C2H2-type 27 zinc finger occupies 2414 to 2436 (FPCEFCGRAFSQGSEWERHVLRH). Glycyl lysine isopeptide (Lys-Gly) (interchain with G-Cter in SUMO2) cross-links involve residues lysine 2444 and lysine 2504.

As to quaternary structure, interacts with PBX1; this interaction prevents PBX1-HOXA9 heterodimer from forming and binding to DNA. In terms of processing, O-GlcNAcylated with O-GlcNAc-6-phosphate.

It localises to the nucleus. Zinc finger nuclear factor involved in transcription by regulating chromatin structure and organization. Involved in the pluripotency and differentiation of embryonic stem cells by regulating SOX2, POU5F1/OCT4, and NANOG. By binding PBX1, prevents the heterodimerization of PBX1 and HOXA9 and their binding to DNA. Regulates neuronal development and neural cell differentiation. The protein is Zinc finger protein 462 of Homo sapiens (Human).